The following is a 359-amino-acid chain: Guanine nucleotide-binding protein G(q) subunit alpha (359 aa).

Residues Cys-9 and Cys-10 are each lipidated (S-palmitoyl cysteine). The 322-residue stretch at 38 to 359 (RELKLLLLGT…QLNLKEYNLV (322 aa)) folds into the G-alpha domain. The tract at residues 41 to 54 (KLLLLGTGESGKST) is G1 motif. The GTP site is built by Ser-50, Gly-51, Lys-52, Ser-53, Thr-54, Ser-156, Leu-180, Arg-181, and Arg-183. Ser-53 contributes to the Mg(2+) binding site. Residues 178 to 186 (DVLRVRVPT) form a G2 motif region. Mg(2+) is bound at residue Thr-186. Residues 201–210 (FRMVDVGGQR) form a G3 motif region. Gln-209 bears the 5-glutamyl histamine mark. The tract at residues 270–277 (ILFLNKKD) is G4 motif. Positions 274, 275, 277, and 331 each coordinate GTP. Residues 329–334 (TCATDT) form a G5 motif region.

The protein belongs to the G-alpha family. G(q) subfamily. As to quaternary structure, g proteins are composed of 3 units; alpha, beta and gamma. The alpha chain contains the guanine nucleotide binding site. Interacts (GDP-bound form) with RIC8A (via C-terminus); promoting GNAQ folding and association with the plasma membrane. Binds NHERF1. Forms a complex with PECAM1 and BDKRB2. Interacts with GAS2L2. In terms of processing, palmitoylated by ZDHHC3 and ZDHHC7. Palmitoylation occurs in the Golgi and participates in the localization of GNAQ to the plasma membrane. Histaminylated at Gln-209 residues by TGM2.

It is found in the cell membrane. The protein localises to the golgi apparatus. Its subcellular location is the nucleus. The protein resides in the nucleus membrane. The enzyme catalyses GTP + H2O = GDP + phosphate + H(+). Guanine nucleotide-binding proteins (G proteins) function as transducers downstream of G protein-coupled receptors (GPCRs) in numerous signaling cascades. The alpha chain contains the guanine nucleotide binding site and alternates between an active, GTP-bound state and an inactive, GDP-bound state. Signaling by an activated GPCR promotes GDP release and GTP binding. The alpha subunit has a low GTPase activity that converts bound GTP to GDP, thereby terminating the signal. Both GDP release and GTP hydrolysis are modulated by numerous regulatory proteins. Signaling is mediated via phospholipase C-beta-dependent inositol lipid hydrolysis for signal propagation: activates phospholipase C-beta: following GPCR activation, GNAQ activates PLC-beta (PLCB1, PLCB2, PLCB3 or PLCB4), leading to production of diacylglycerol (DAG) and inositol 1,4,5-trisphosphate (IP3). Required for platelet activation. Regulates B-cell selection and survival and is required to prevent B-cell-dependent autoimmunity. Regulates chemotaxis of BM-derived neutrophils and dendritic cells (in vitro). Transduces FFAR4 signaling in response to long-chain fatty acids (LCFAs). Together with GNA11, required for heart development. In Canis lupus familiaris (Dog), this protein is Guanine nucleotide-binding protein G(q) subunit alpha (GNAQ).